A 341-amino-acid polypeptide reads, in one-letter code: L-threonine 3-dehydrogenase (341 aa).

A Zn(2+)-binding site is contributed by C38. Residues T40 and H43 each act as charge relay system in the active site. The Zn(2+) site is built by H63, E64, C93, C96, C99, and C107. Residues I175, D195, R200, 262–264 (LGI), and 286–287 (IY) each bind NAD(+).

This sequence belongs to the zinc-containing alcohol dehydrogenase family. As to quaternary structure, homotetramer. The cofactor is Zn(2+).

The protein resides in the cytoplasm. It catalyses the reaction L-threonine + NAD(+) = (2S)-2-amino-3-oxobutanoate + NADH + H(+). Its pathway is amino-acid degradation; L-threonine degradation via oxydo-reductase pathway; glycine from L-threonine: step 1/2. Catalyzes the NAD(+)-dependent oxidation of L-threonine to 2-amino-3-ketobutyrate. The protein is L-threonine 3-dehydrogenase of Colwellia psychrerythraea (strain 34H / ATCC BAA-681) (Vibrio psychroerythus).